The chain runs to 115 residues: Large ribosomal subunit protein bL19 (115 aa).

Belongs to the bacterial ribosomal protein bL19 family.

Its function is as follows. This protein is located at the 30S-50S ribosomal subunit interface and may play a role in the structure and function of the aminoacyl-tRNA binding site. The sequence is that of Large ribosomal subunit protein bL19 from Pectobacterium atrosepticum (strain SCRI 1043 / ATCC BAA-672) (Erwinia carotovora subsp. atroseptica).